A 296-amino-acid chain; its full sequence is Glycine N-acyltransferase (296 aa).

K16 is subject to N6-acetyllysine; alternate. Position 16 is an N6-succinyllysine; alternate (K16). K113 is subject to N6-acetyllysine. K127, K141, and K142 each carry N6-acetyllysine; alternate. K127, K141, and K142 each carry N6-succinyllysine; alternate. An N6-acetyllysine mark is found at K159 and K167. Position 169 is an N6-succinyllysine (K169). Residues K183 and K256 each carry the N6-acetyllysine; alternate modification. N6-succinyllysine; alternate is present on residues K183 and K256. The residue at position 267 (K267) is an N6-succinyllysine.

This sequence belongs to the glycine N-acyltransferase family.

Its subcellular location is the mitochondrion. The enzyme catalyses an acyl-CoA + glycine = an N-acylglycine + CoA + H(+). It catalyses the reaction benzoyl-CoA + glycine = N-benzoylglycine + CoA + H(+). Mitochondrial acyltransferase which transfers an acyl group to the N-terminus of glycine and glutamine, although much less efficiently. Can conjugate a multitude of substrates to form a variety of N-acylglycines, thereby detoxify xenobiotics, such as benzoic acid or salicylic acid, and endogenous organic acids, such as isovaleric acid. The polypeptide is Glycine N-acyltransferase (Glyat) (Mus musculus (Mouse)).